The primary structure comprises 332 residues: Glycerol-3-phosphate dehydrogenase [NAD(P)+] (332 aa).

Ser11, Phe12, Arg32, and Lys106 together coordinate NADPH. Sn-glycerol 3-phosphate contacts are provided by Lys106, Gly134, and Ser136. Ala138 provides a ligand contact to NADPH. Residues Lys189, Asp242, Ser252, Arg253, and Asn254 each contribute to the sn-glycerol 3-phosphate site. Lys189 (proton acceptor) is an active-site residue. Residue Arg253 coordinates NADPH. Val277 and Glu279 together coordinate NADPH.

The protein belongs to the NAD-dependent glycerol-3-phosphate dehydrogenase family.

The protein resides in the cytoplasm. The enzyme catalyses sn-glycerol 3-phosphate + NAD(+) = dihydroxyacetone phosphate + NADH + H(+). The catalysed reaction is sn-glycerol 3-phosphate + NADP(+) = dihydroxyacetone phosphate + NADPH + H(+). It participates in membrane lipid metabolism; glycerophospholipid metabolism. Catalyzes the reduction of the glycolytic intermediate dihydroxyacetone phosphate (DHAP) to sn-glycerol 3-phosphate (G3P), the key precursor for phospholipid synthesis. In Clostridium acetobutylicum (strain ATCC 824 / DSM 792 / JCM 1419 / IAM 19013 / LMG 5710 / NBRC 13948 / NRRL B-527 / VKM B-1787 / 2291 / W), this protein is Glycerol-3-phosphate dehydrogenase [NAD(P)+].